The chain runs to 551 residues: Palatinase (551 aa).

The active-site Nucleophile is the D201. The active-site Proton donor is the E243.

The protein belongs to the glycosyl hydrolase 13 family.

It catalyses the reaction 6-O-alpha-D-glucopyranosyl-D-fructose + H2O = alpha-D-glucose + D-fructose. It participates in glycan degradation; palatinose degradation. Catalyzes the hydrolysis of palatinose. Shows a strict specificity toward palatinose, and cannot release glucose from the disaccharides sucrose, maltose, trehalose and melibiose. Involved in the degradation of palatinose, a sucrose isomer that is formed as a reserve material under conditions of excess carbon availability, sequestered in a form unavailable to competitors such as fungi or the host plant, and whose consumption appears to be postponed until the preferentially metabolized carbon source (e.g. sucrose) is depleted. This chain is Palatinase, found in Erwinia rhapontici (Pectobacterium rhapontici).